Here is an 87-residue protein sequence, read N- to C-terminus: Homeotic protein ultrabithorax (87 aa).

The Antp-type hexapeptide signature appears at 22 to 27; that stretch reads FYPWMA.

The protein belongs to the Antp homeobox family. In the embryo, expression is seen in the epidermis, somatic and visceral mesoderm, and the peripheral and central nervous system.

Its subcellular location is the nucleus. Functionally, sequence-specific transcription factor which is part of a developmental regulatory system that provides cells with specific positional identities on the anterior-posterior axis. Binds the consensus region 5'-TTAAT[GT][GA]-3'. This homeotic protein controls development of the cells in the posterior thoracic and first abdominal segments. It activates the synthesis of the decapentaplegic (DPP) growth factor. In Drosophila hydei (Fruit fly), this protein is Homeotic protein ultrabithorax (Ubx).